Reading from the N-terminus, the 559-residue chain is Glutamine--tRNA ligase (559 aa).

Positions P36 to H46 match the 'HIGH' region motif. Residues E37–N39 and H43–S49 each bind ATP. The L-glutamine site is built by D69 and Y214. Residues T233, R263 to L264, and L271 to K273 each bind ATP. The short motif at L270–R274 is the 'KMSKS' region element.

Belongs to the class-I aminoacyl-tRNA synthetase family. In terms of assembly, monomer.

The protein resides in the cytoplasm. The catalysed reaction is tRNA(Gln) + L-glutamine + ATP = L-glutaminyl-tRNA(Gln) + AMP + diphosphate. In Nitrobacter winogradskyi (strain ATCC 25391 / DSM 10237 / CIP 104748 / NCIMB 11846 / Nb-255), this protein is Glutamine--tRNA ligase.